We begin with the raw amino-acid sequence, 183 residues long: ATP-dependent protease subunit HslV (183 aa).

The active site involves threonine 13. Na(+) is bound by residues glycine 168, cysteine 171, and threonine 174.

Belongs to the peptidase T1B family. HslV subfamily. In terms of assembly, a double ring-shaped homohexamer of HslV is capped on each side by a ring-shaped HslU homohexamer. The assembly of the HslU/HslV complex is dependent on binding of ATP.

Its subcellular location is the cytoplasm. It carries out the reaction ATP-dependent cleavage of peptide bonds with broad specificity.. Allosterically activated by HslU binding. Its function is as follows. Protease subunit of a proteasome-like degradation complex believed to be a general protein degrading machinery. This chain is ATP-dependent protease subunit HslV, found in Stenotrophomonas maltophilia (strain R551-3).